Here is a 353-residue protein sequence, read N- to C-terminus: Photosystem II D2 protein (353 aa).

N-acetylthreonine is present on threonine 2. The residue at position 2 (threonine 2) is a Phosphothreonine. The helical transmembrane segment at 41–61 threads the bilayer; the sequence is CAYFALGGWFTGTTFVTSWYT. A chlorophyll a-binding site is contributed by histidine 118. Residues 125–141 form a helical membrane-spanning segment; it reads GFMLRQFELARSVQLRP. Pheophytin a contacts are provided by glutamine 130 and asparagine 143. Residues 153–166 traverse the membrane as a helical segment; the sequence is VFVSVFLIYPLGQS. Chlorophyll a is bound at residue histidine 198. Residues 208-228 traverse the membrane as a helical segment; sequence AALLCAIHGATVENTLFEDGD. Positions 215 and 262 each coordinate a plastoquinone. Fe cation is bound at residue histidine 215. Fe cation is bound at residue histidine 269. The helical transmembrane segment at 279 to 295 threads the bilayer; the sequence is GLWMSAIGVVGLALNLR.

It belongs to the reaction center PufL/M/PsbA/D family. PSII is composed of 1 copy each of membrane proteins PsbA, PsbB, PsbC, PsbD, PsbE, PsbF, PsbH, PsbI, PsbJ, PsbK, PsbL, PsbM, PsbT, PsbX, PsbY, PsbZ, Psb30/Ycf12, at least 3 peripheral proteins of the oxygen-evolving complex and a large number of cofactors. It forms dimeric complexes. The D1/D2 heterodimer binds P680, chlorophylls that are the primary electron donor of PSII, and subsequent electron acceptors. It shares a non-heme iron and each subunit binds pheophytin, quinone, additional chlorophylls, carotenoids and lipids. There is also a Cl(-1) ion associated with D1 and D2, which is required for oxygen evolution. The PSII complex binds additional chlorophylls, carotenoids and specific lipids. serves as cofactor.

The protein localises to the plastid. The protein resides in the chloroplast thylakoid membrane. It catalyses the reaction 2 a plastoquinone + 4 hnu + 2 H2O = 2 a plastoquinol + O2. Its function is as follows. Photosystem II (PSII) is a light-driven water:plastoquinone oxidoreductase that uses light energy to abstract electrons from H(2)O, generating O(2) and a proton gradient subsequently used for ATP formation. It consists of a core antenna complex that captures photons, and an electron transfer chain that converts photonic excitation into a charge separation. The D1/D2 (PsbA/PsbD) reaction center heterodimer binds P680, the primary electron donor of PSII as well as several subsequent electron acceptors. D2 is needed for assembly of a stable PSII complex. In Phalaenopsis aphrodite subsp. formosana (Moth orchid), this protein is Photosystem II D2 protein.